The sequence spans 344 residues: Uroporphyrinogen decarboxylase (344 aa).

Substrate-binding positions include 27–31 (RQAGR), Phe-46, Asp-76, Tyr-151, Ser-206, and His-319.

It belongs to the uroporphyrinogen decarboxylase family. In terms of assembly, homodimer.

The protein resides in the cytoplasm. The enzyme catalyses uroporphyrinogen III + 4 H(+) = coproporphyrinogen III + 4 CO2. The protein operates within porphyrin-containing compound metabolism; protoporphyrin-IX biosynthesis; coproporphyrinogen-III from 5-aminolevulinate: step 4/4. Functionally, catalyzes the decarboxylation of four acetate groups of uroporphyrinogen-III to yield coproporphyrinogen-III. The protein is Uroporphyrinogen decarboxylase of Halalkalibacterium halodurans (strain ATCC BAA-125 / DSM 18197 / FERM 7344 / JCM 9153 / C-125) (Bacillus halodurans).